The chain runs to 35 residues: MEALVYTFLLVSTLGIIFFAIFFREPPKILTKKMK.

The helical transmembrane segment at Ala-3–Phe-23 threads the bilayer.

Belongs to the PsbT family. In terms of assembly, PSII is composed of 1 copy each of membrane proteins PsbA, PsbB, PsbC, PsbD, PsbE, PsbF, PsbH, PsbI, PsbJ, PsbK, PsbL, PsbM, PsbT, PsbY, PsbZ, Psb30/Ycf12, at least 3 peripheral proteins of the oxygen-evolving complex and a large number of cofactors. It forms dimeric complexes.

The protein resides in the plastid. It is found in the chloroplast thylakoid membrane. In terms of biological role, found at the monomer-monomer interface of the photosystem II (PS II) dimer, plays a role in assembly and dimerization of PSII. PSII is a light-driven water plastoquinone oxidoreductase, using light energy to abstract electrons from H(2)O, generating a proton gradient subsequently used for ATP formation. This Gossypium barbadense (Sea Island cotton) protein is Photosystem II reaction center protein T.